We begin with the raw amino-acid sequence, 550 residues long: Putative golgin subfamily A member 6-like protein 19 (550 aa).

The span at 1–11 shows a compositional bias: pro residues; that stretch reads MWPQPRLPPHP. Residues 1–77 are disordered; the sequence is MWPQPRLPPH…DSATGVYGEG (77 aa). Residues 51–62 show a composition bias toward polar residues; the sequence is NGSSPDTATSGG. Residues 157–405 are a coiled coil; it reads SKVEQLQDET…QERLRQQDER (249 aa). Basic and acidic residues predominate over residues 467-480; the sequence is KELEKSGGAEEPRG. The tract at residues 467–529 is disordered; it reads KELEKSGGAE…VGTGEAAGGA (63 aa). Composition is skewed to low complexity over residues 484–499 and 517–529; these read AAAA…PQGA and GEAV…AGGA.

This sequence belongs to the GOLGA6 family.

This Homo sapiens (Human) protein is Putative golgin subfamily A member 6-like protein 19 (GOLGA6L19).